Consider the following 344-residue polypeptide: Dihydroorotase (344 aa).

Residues H13 and H15 each coordinate Zn(2+). Residues 15-17 (HVR) and N41 each bind substrate. Residues K99, H136, and H174 each contribute to the Zn(2+) site. At K99 the chain carries N6-carboxylysine. A substrate-binding site is contributed by H136. Residue L219 coordinates substrate. D247 provides a ligand contact to Zn(2+). The active site involves D247. The substrate site is built by H251 and A263.

This sequence belongs to the metallo-dependent hydrolases superfamily. DHOase family. Class II DHOase subfamily. As to quaternary structure, homodimer. Zn(2+) is required as a cofactor.

The catalysed reaction is (S)-dihydroorotate + H2O = N-carbamoyl-L-aspartate + H(+). It participates in pyrimidine metabolism; UMP biosynthesis via de novo pathway; (S)-dihydroorotate from bicarbonate: step 3/3. Functionally, catalyzes the reversible cyclization of carbamoyl aspartate to dihydroorotate. This is Dihydroorotase from Aromatoleum aromaticum (strain DSM 19018 / LMG 30748 / EbN1) (Azoarcus sp. (strain EbN1)).